Here is a 501-residue protein sequence, read N- to C-terminus: Bifunctional NAD(P)H-hydrate repair enzyme Nnr (501 aa).

The interval 1–221 (MESITSIEMY…PPEAELVVGP (221 aa)) is NAD(P)H-hydrate epimerase. The YjeF N-terminal domain maps to 9 to 217 (MYVADRNAEW…PIGIPPEAEL (209 aa)). Positions 56–60 (DNGGD) are NADPHX 1; for epimerase activity. Residues Asn-57 and Asp-127 each coordinate K(+). The tract at residues 131–137 (GTGIRGV) is NADPHX 1; for epimerase activity. Residue Asp-160 coordinates (6S)-NADPHX. Residue Ser-163 coordinates K(+). The 276-residue stretch at 220–495 (GPGDFAYLNF…ERLPRVIRRY (276 aa)) folds into the YjeF C-terminal domain. An ADP-dependent (S)-NAD(P)H-hydrate dehydratase region spans residues 221–501 (PGDFAYLNFT…IRRYAFESIR (281 aa)). Position 323 (Gly-323) interacts with (6S)-NADPHX. An NADPHX 2; for dehydratase activity region spans residues 371–377 (HAGEFKA). ADP contacts are provided by residues 408 to 412 (KGRYD) and 427 to 436 (TPAMTVGGTG). Asp-437 provides a ligand contact to (6S)-NADPHX.

This sequence in the N-terminal section; belongs to the NnrE/AIBP family. The protein in the C-terminal section; belongs to the NnrD/CARKD family. K(+) serves as cofactor.

The catalysed reaction is (6S)-NADHX + ADP = AMP + phosphate + NADH + H(+). It carries out the reaction (6S)-NADPHX + ADP = AMP + phosphate + NADPH + H(+). It catalyses the reaction (6R)-NADHX = (6S)-NADHX. The enzyme catalyses (6R)-NADPHX = (6S)-NADPHX. Functionally, bifunctional enzyme that catalyzes the epimerization of the S- and R-forms of NAD(P)HX and the dehydration of the S-form of NAD(P)HX at the expense of ADP, which is converted to AMP. This allows the repair of both epimers of NAD(P)HX, a damaged form of NAD(P)H that is a result of enzymatic or heat-dependent hydration. The polypeptide is Bifunctional NAD(P)H-hydrate repair enzyme Nnr (nnr) (Pyrobaculum aerophilum (strain ATCC 51768 / DSM 7523 / JCM 9630 / CIP 104966 / NBRC 100827 / IM2)).